A 598-amino-acid polypeptide reads, in one-letter code: IQ calmodulin-binding motif-containing protein 1 (598 aa).

Residues 1 to 157 (MKPTGTDPRI…SLFWLLGGHV (157 aa)) form an interaction with BBS1, BBS8 and BBS9 region. Residues 287–598 (QEVEEQKLHQ…NLFIGGTKPP (312 aa)) form an interaction with CEP290, BBS1, BBS2, BBS4, BBS5, BBS7, BBS8 and BBS9 region. 4 IQ domains span residues 294–317 (LHQA…LKKL), 318–338 (PSAV…MLLE), 387–416 (EEKS…SLIE), and 417–437 (YKAA…CRKK). The stretch at 336–373 (LLEINRQKEEEDLKLQLQLQRQRAMRLSRELQLSMLEI) forms a coiled coil. The segment at 530–598 (AEGKEPELFL…NLFIGGTKPP (69 aa)) is interaction with BBS1, BBS2, BBS4, BBS7, BBS8 and BBS9. Serine 572 is modified (phosphoserine).

As to quaternary structure, interacts with CEP290/NPHP6; IQCB1/NPHP5 and CEP290 are proposed to form a functional NPHP5-6 module/NPHP6; localized to the centrosome. Interacts with calmodulin, ATXN10. Interacts with NPHP1, INVS, NPHP4 and RPGRIP1L; these interactions likely require additional interactors. Associates with the BBSome complex; interacts with BBS1, BBS2, BBS4, BBS5, BBS7, BBS8 and BBS9. Ubiquitously expressed in fetal and adult tissues. Localized to the outer segments and connecting cilia of photoreceptor cells. Up-regulated in a number of primary colorectal and gastric tumors.

It localises to the cytoplasm. The protein resides in the cytoskeleton. It is found in the microtubule organizing center. The protein localises to the centrosome. Its subcellular location is the centriole. Its function is as follows. Involved in ciliogenesis. The function in an early step in cilia formation depends on its association with CEP290/NPHP6. Involved in regulation of the BBSome complex integrity, specifically for presence of BBS2 and BBS5 in the complex, and in ciliary targeting of selected BBSome cargos. May play a role in controlling entry of the BBSome complex to cilia possibly implicating CEP290/NPHP6. This is IQ calmodulin-binding motif-containing protein 1 (IQCB1) from Homo sapiens (Human).